We begin with the raw amino-acid sequence, 249 residues long: Aspartate/glutamate leucyltransferase (249 aa).

This sequence belongs to the R-transferase family. Bpt subfamily.

It is found in the cytoplasm. The enzyme catalyses N-terminal L-glutamyl-[protein] + L-leucyl-tRNA(Leu) = N-terminal L-leucyl-L-glutamyl-[protein] + tRNA(Leu) + H(+). The catalysed reaction is N-terminal L-aspartyl-[protein] + L-leucyl-tRNA(Leu) = N-terminal L-leucyl-L-aspartyl-[protein] + tRNA(Leu) + H(+). Functionally, functions in the N-end rule pathway of protein degradation where it conjugates Leu from its aminoacyl-tRNA to the N-termini of proteins containing an N-terminal aspartate or glutamate. The polypeptide is Aspartate/glutamate leucyltransferase (Xanthobacter autotrophicus (strain ATCC BAA-1158 / Py2)).